The following is a 656-amino-acid chain: Acyl-CoA-binding domain-containing protein 6 (656 aa).

One can recognise an ACB domain in the interval 8-102; the sequence is YPDRFYAAAA…LEEEDPGWYS (95 aa). An acyl-CoA contacts are provided by residues 44–48 and Lys70; that span reads YGLYQ. The disordered stretch occupies residues 129 to 148; it reads ASTNGTSVPEPKTISENGSS. Kelch repeat units follow at residues 194–241, 254–304, 305–354, 356–405, 406–454, and 461–507; these read KMYI…AQVS, KFFS…LVGT, TLVL…CHAD, YLLI…TVGE, NWYI…LVHS, and YLIS…EPEV. A coiled-coil region spans residues 527–636; the sequence is LKKDDANELL…EQAALEAKQR (110 aa). The disordered stretch occupies residues 627 to 656; the sequence is EQAALEAKQRQSSSGMWGWLVGTPPDKSES.

It belongs to the ACBP family. Highly expressed in leaves. Expressed in roots and seeds.

It localises to the peroxisome. Functionally, binds medium- and long-chain acyl-CoA esters with high affinity. Can interact in vitro with linoleoyl-CoA and linolenoyl-CoA. Binds phosphatidic acid (PA) and phosphatidylcholine (PC) in vitro. May play a role in the biosynthesis of phospholipids. May be involved in lipid degradation via peroxisomal beta-oxydation. The sequence is that of Acyl-CoA-binding domain-containing protein 6 from Oryza sativa subsp. japonica (Rice).